The sequence spans 395 residues: Phosphoglycerate kinase (395 aa).

Substrate is bound by residues 20-22 (DFN), Arg36, 59-62 (HLGR), Arg120, and Arg157. Residues Lys208, Gly296, Glu327, and 353–356 (GGDT) contribute to the ATP site.

It belongs to the phosphoglycerate kinase family. As to quaternary structure, monomer.

The protein localises to the cytoplasm. It catalyses the reaction (2R)-3-phosphoglycerate + ATP = (2R)-3-phospho-glyceroyl phosphate + ADP. It functions in the pathway carbohydrate degradation; glycolysis; pyruvate from D-glyceraldehyde 3-phosphate: step 2/5. This Tropheryma whipplei (strain Twist) (Whipple's bacillus) protein is Phosphoglycerate kinase.